Consider the following 184-residue polypeptide: Translation initiation factor IF-3 (184 aa).

The protein belongs to the IF-3 family. As to quaternary structure, monomer.

The protein localises to the cytoplasm. Functionally, IF-3 binds to the 30S ribosomal subunit and shifts the equilibrium between 70S ribosomes and their 50S and 30S subunits in favor of the free subunits, thus enhancing the availability of 30S subunits on which protein synthesis initiation begins. The chain is Translation initiation factor IF-3 from Mycoplasma genitalium (strain ATCC 33530 / DSM 19775 / NCTC 10195 / G37) (Mycoplasmoides genitalium).